A 604-amino-acid polypeptide reads, in one-letter code: Structure-specific endonuclease subunit MUS81 (604 aa).

Disordered regions lie at residues 93–138, 227–248, and 253–272; these read AAVH…REYV, KLDS…GQNV, and LEEE…RPAV. Basic and acidic residues-rich tracts occupy residues 116–128 and 227–240; these read EHTK…VRKE and KLDS…HEDV. Positions 138–254 are winged helix domain (WHD); critical for endonuclease activity; the sequence is VPQKRSGGYA…GQNVVDLTLE (117 aa). Residues 253–262 show a composition bias toward acidic residues; that stretch reads LEEEDEDEEK. The ERCC4 domain occupies 314 to 423; that stretch reads VLCVDLCETT…KPIYLVEECG (110 aa). Catalysis depends on residues Asp318, Glu321, and Asp353. 5 residues coordinate Mg(2+): Asp318, Glu321, Asp353, Glu384, and Arg385. The interval 524-598 is helix-hairpin-helix (2HhH); involved in DNA recognition and bending; sequence VREVFARQLM…LSRTIYQLYC (75 aa).

Belongs to the XPF family. Part of the heterodimeric DNA structure-specific endonuclease complex MUS81-EME1. Part of the heterodimeric DNA structure-specific endonuclease complex MUS81-EME2. Mg(2+) is required as a cofactor.

The protein resides in the nucleus. The protein localises to the nucleolus. Catalytic subunit of two functionally distinct, structure-specific, heterodimeric DNA endonucleases MUS81-EME1 and MUS81-EME2 that are involved in the maintenance of genome stability. Both endonucleases have essentially the same substrate specificity though MUS81-EME2 is more active than its MUS81-EME1 counterpart. Both cleave 3'-flaps and nicked Holliday junctions, and exhibit limited endonuclease activity with 5' flaps and nicked double-stranded DNAs. MUS81-EME2 which is active during the replication of DNA is more specifically involved in replication fork processing. Replication forks frequently encounter obstacles to their passage, including DNA base lesions, DNA interstrand cross-links, difficult-to-replicate sequences, transcription bubbles, or tightly bound proteins. One mechanism for the restart of a stalled replication fork involves nucleolytic cleavage mediated by the MUS81-EME2 endonuclease. By acting upon the stalled fork, MUS81-EME2 generates a DNA double-strand break (DSB) that can be repaired by homologous recombination, leading to the restoration of an active fork. MUS81-EME2 could also function in telomere maintenance. MUS81-EME1, on the other hand, is active later in the cell cycle and functions in the resolution of mitotic recombination intermediates including the Holliday junctions, the four-way DNA intermediates that form during homologous recombination. In Danio rerio (Zebrafish), this protein is Structure-specific endonuclease subunit MUS81 (mus81).